Reading from the N-terminus, the 318-residue chain is uncharacterized protein (318 aa).

This sequence belongs to the NAD(P)-dependent epimerase/dehydratase family.

This is an uncharacterized protein from Staphylococcus epidermidis (strain ATCC 12228 / FDA PCI 1200).